Consider the following 176-residue polypeptide: Ribosome rescue factor SmrB (176 aa).

Positions 93-168 (LDLHGYRQSE…GDAALLVLID (76 aa)) constitute a Smr domain.

Belongs to the SmrB family. Associates with collided ribosomes, but not with correctly translating polysomes.

Its function is as follows. Acts as a ribosome collision sensor. Detects stalled/collided disomes (pairs of ribosomes where the leading ribosome is stalled and a second ribosome has collided with it) and endonucleolytically cleaves mRNA at the 5' boundary of the stalled ribosome. Stalled/collided disomes form a new interface (primarily via the 30S subunits) that binds SmrB. Cleaved mRNA becomes available for tmRNA ligation, leading to ribosomal subunit dissociation and rescue of stalled ribosomes. This is Ribosome rescue factor SmrB from Shewanella baltica (strain OS223).